A 306-amino-acid polypeptide reads, in one-letter code: Galactosylgalactosylxylosylprotein 3-beta-glucuronosyltransferase I (306 aa).

Residues 1 to 11 (MSEVRIRPRQV) are Cytoplasmic-facing. Residues 12 to 29 (LILIIVFLVVLMMVHRNG) traverse the membrane as a helical; Signal-anchor for type II membrane protein segment. At 30 to 306 (KRTCQGPEYL…GQRSDGGMEV (277 aa)) the chain is on the lumenal side. Asn90 carries N-linked (GlcNAc...) asparagine glycosylation. Residue Asp163 coordinates Mn(2+). Glu252 functions as the Proton acceptor in the catalytic mechanism.

The protein belongs to the glycosyltransferase 43 family. Requires Mn(2+) as cofactor.

Its subcellular location is the golgi apparatus membrane. The enzyme catalyses 3-O-(beta-D-galactosyl-(1-&gt;3)-beta-D-galactosyl-(1-&gt;4)-beta-D-xylosyl)-L-seryl-[protein] + UDP-alpha-D-glucuronate = 3-O-(beta-D-GlcA-(1-&gt;3)-beta-D-Gal-(1-&gt;3)-beta-D-Gal-(1-&gt;4)-beta-D-Xyl)-L-seryl-[protein] + UDP + H(+). It functions in the pathway protein modification; protein glycosylation. Involved in the biosynthesis of L2/HNK-1 carbohydrate epitope on both glycolipids and glycoproteins. Shows strict specificity for Gal-beta-1,3-Gal-beta-1,4-Xyl, exhibiting negligible incorporation into other galactoside substrates. This chain is Galactosylgalactosylxylosylprotein 3-beta-glucuronosyltransferase I (GlcAT-I), found in Drosophila melanogaster (Fruit fly).